The primary structure comprises 256 residues: ATG8-interacting protein 1 (256 aa).

Positions 14–17 (WEVV) match the AIM (Atg8-family-interacting motif) motif. A helical transmembrane segment spans residues 181 to 200 (ANAIWSLFFAAAVTGLVVLG). Positions 208 to 211 (WQVL) match the AIM (Atg8-family-interacting motif) motif.

As to quaternary structure, interacts with ATG8F. Interacts with ATG8H. Interacts with APE1 and PSBS/NPQ4.

The protein resides in the endoplasmic reticulum membrane. Its subcellular location is the membrane. The protein localises to the plastid. It is found in the chloroplast membrane. Functionally, involved in a special stress-induced plastid-to-vacuole protein trafficking pathway. Interacts with ATG8F in plastid bodies to subsequently enable their delivery to the vacuole by an autophagic pathway. Interacts with the plastid proteins APE1 and PSBS/NPQ4 and may recruit them as cargo into plastid bodies that may be recognized by the autophagy machinery for degradation in the vacuole. Involved in the alleviation of damage caused by salt stress during plant development, probably through its involvement in plastid-to-vacuole and ER-to-vacuole trafficking. Plays a role in seed germination in response to exogenous abscisic acid (ABA) treatment. This is ATG8-interacting protein 1 from Arabidopsis thaliana (Mouse-ear cress).